The chain runs to 72 residues: MRPTQFVLNAAKKKSGFSVPVELTPLFLAMGVALASGTWFSYKKFFHDDSLRVSRKNPEQSALDKVLNQKAE.

The helical transmembrane segment at Pro-20 to Tyr-42 threads the bilayer.

It belongs to the UPF0495 family.

It localises to the membrane. In Kluyveromyces lactis (strain ATCC 8585 / CBS 2359 / DSM 70799 / NBRC 1267 / NRRL Y-1140 / WM37) (Yeast), this protein is UPF0495 protein KLLA0D04334g.